The sequence spans 432 residues: Enolase (432 aa).

Gln-163 serves as a coordination point for (2R)-2-phosphoglycerate. Catalysis depends on Glu-205, which acts as the Proton donor. Asp-242, Glu-289, and Asp-316 together coordinate Mg(2+). Lys-341, Arg-370, Ser-371, and Lys-392 together coordinate (2R)-2-phosphoglycerate. Catalysis depends on Lys-341, which acts as the Proton acceptor.

This sequence belongs to the enolase family. It depends on Mg(2+) as a cofactor. In terms of processing, probably phosphorylated.

The protein resides in the cytoplasm. It localises to the secreted. The protein localises to the cell surface. The catalysed reaction is (2R)-2-phosphoglycerate = phosphoenolpyruvate + H2O. Its pathway is carbohydrate degradation; glycolysis; pyruvate from D-glyceraldehyde 3-phosphate: step 4/5. In terms of biological role, catalyzes the reversible conversion of 2-phosphoglycerate (2-PG) into phosphoenolpyruvate (PEP). It is essential for the degradation of carbohydrates via glycolysis. Functionally, 'Moonlights' as a plasminogen receptor. Binds plasminogen and human salivary mucin MG2 when expressed on the bacterial cell surface, potentially allowing the bacterium to acquire surface-associated proteolytic activity that may help the dissemination through oral tissues and entrance into the blood stream. The chain is Enolase from Streptococcus mutans serotype c (strain ATCC 700610 / UA159).